A 231-amino-acid polypeptide reads, in one-letter code: Protein HHL1, chloroplastic (231 aa).

The transit peptide at 1-39 directs the protein to the chloroplast; that stretch reads MEVSMSLNALTRLPLKNTGRFEEVGLARHSLFSSRTACR. Residues 93–113 form a helical membrane-spanning segment; it reads YLWYPLSIIAGGTTAKIMVAA. Residues 206–231 are disordered; the sequence is SFGKLSSLNPGSDEKTEETSDEKAKA. Residues 217–231 show a composition bias toward basic and acidic residues; the sequence is SDEKTEETSDEKAKA.

Interacts with psbB, psbC and LQY1, but not with psbA or psbD.

Its subcellular location is the plastid. It localises to the chloroplast thylakoid membrane. Functionally, involved in photoprotection. Forms a complex with LQY1 that is involved in the repair and reassembly cycle of the PSII-LHCII supercomplex under high-light conditions. May function in guiding the release of psbC from PSII core monomers. In Arabidopsis thaliana (Mouse-ear cress), this protein is Protein HHL1, chloroplastic.